We begin with the raw amino-acid sequence, 172 residues long: Neudesin (172 aa).

Positions 1 to 31 (MVGPAPRRRLRPLAALALVLALAPGLPTARA) are cleaved as a signal peptide. The 86-residue stretch at 44–129 (VRLFTEEELA…KELEALDEVF (86 aa)) folds into the Cytochrome b5 heme-binding domain. An N6-acetyllysine modification is found at K136. Residues 151-172 (DGSPNLDFKPEDQPHFDIKDEF) form a disordered region. The span at 158 to 172 (FKPEDQPHFDIKDEF) shows a compositional bias: basic and acidic residues.

It belongs to the cytochrome b5 family. MAPR subfamily. Interacts with PINK1 and PARK7. Ubiquitously expressed with high expression in heart. Over-expressed in various tumors including carcinomas of the uterine cervix, lymphoma, colon, lung, skin and leukemia, as well as carcinoma of the breast.

It localises to the secreted. The protein localises to the extracellular space. The protein resides in the mitochondrion. Its subcellular location is the endoplasmic reticulum. Acts as a neurotrophic factor in postnatal mature neurons enhancing neuronal survival. Promotes cell proliferation and neurogenesis in undifferentiated neural progenitor cells at the embryonic stage and inhibits differentiation of astrocytes. Its neurotrophic activity is exerted via MAPK1/ERK2, MAPK3/ERK1 and AKT1/AKT pathways. Neurotrophic activity is enhanced by binding to heme. Also acts as an anorexigenic neurotrophic factor that contributes to energy balance. This chain is Neudesin, found in Homo sapiens (Human).